The chain runs to 531 residues: Zinc finger CCCH-type with G patch domain-containing protein (531 aa).

N-acetylmethionine is present on methionine 1. The disordered stretch occupies residues 91-133; it reads EAPAAARGSGSETVPKAEAGPESAAGGQEEEEGEDEEELSGTK. Low complexity predominate over residues 107-117; the sequence is AEAGPESAAGG. Residues 118-129 are compositionally biased toward acidic residues; sequence QEEEEGEDEEEL. Residues 175–201 form a C3H1-type zinc finger; the sequence is KSLKPCPFFLEGKCRFKENCRFSHGQV. The tract at residues 267–289 is disordered; that stretch reads PPLRTEATESDSDSDGTGDSSYA. Positions 333–379 constitute a G-patch domain; the sequence is TRGIGSRLLTKMGYEFGKGLGRHAEGRVEPIHAVVLPRGKSLDQCVE. At serine 373 the chain carries Phosphoserine. Disordered stretches follow at residues 385-409, 426-446, and 509-531; these read TRVGKAGTNKPPRCRGRGARPGGRP, APGALEAGAAPAGRRSKDMYH, and RAQEAGLQQEQRKADTHKKMTEF. Residues 426-438 are compositionally biased toward low complexity; sequence APGALEAGAAPAG. Over residues 518–531 the composition is skewed to basic and acidic residues; that stretch reads EQRKADTHKKMTEF.

In terms of assembly, interacts with CHD4/Mi-2; the interaction is direct. Post-translationally, ubiquitinated in case of infection by HIV-1, leading to its degradation. Ubiquitination is mediated by the CUL4A-RBX1-DDB1-DCAF1/VPRBP complex that is hijacked by HIV-1 via interaction between HIV-1 Vpr and DCAF1/VPRBP. Widely expressed.

Its subcellular location is the nucleus. In terms of biological role, transcription repressor that specifically binds the 5'-GGAG[GA]A[GA]A-3' consensus sequence. Represses transcription by recruiting the chromatin multiprotein complex NuRD to target promoters. Negatively regulates expression of EGFR, a gene involved in cell proliferation, survival and migration. Its ability to repress genes of the EGFR pathway suggest it may act as a tumor suppressor. Able to suppress breast carcinogenesis. Antagonizes the transcription repression by isoform 1 by competing for the binding of the NuRD complex. Does not bind DNA. The chain is Zinc finger CCCH-type with G patch domain-containing protein (ZGPAT) from Homo sapiens (Human).